The primary structure comprises 1089 residues: Carbamoyl phosphate synthase large chain (1089 aa).

The tract at residues 1–399 is carboxyphosphate synthetic domain; sequence MPKRTDIKSI…SIQKALCSLE (399 aa). The ATP site is built by arginine 127, arginine 167, glycine 173, glycine 174, glutamate 206, leucine 208, glutamate 213, glycine 239, valine 240, histidine 241, glutamine 283, and glutamate 297. Residues 131-326 enclose the ATP-grasp 1 domain; it reads KECMKKIGMD…IAKVATLLAV (196 aa). Mg(2+)-binding residues include glutamine 283, glutamate 297, and asparagine 299. The Mn(2+) site is built by glutamine 283, glutamate 297, and asparagine 299. The oligomerization domain stretch occupies residues 400-553; that stretch reads RSLSGFDRVK…NVSELTQSKN (154 aa). The segment at 554 to 951 is carbamoyl phosphate synthetic domain; sequence DAKDKKEKKV…SYAKSQIASF (398 aa). The ATP-grasp 2 domain maps to 680 to 871; sequence AEFITKLGIN…LAKVATRVMW (192 aa). Positions 716, 755, 757, 762, 787, 788, 789, 790, 830, and 842 each coordinate ATP. Mg(2+)-binding residues include glutamine 830, glutamate 842, and asparagine 844. Residues glutamine 830, glutamate 842, and asparagine 844 each contribute to the Mn(2+) site. Residues 952–1089 enclose the MGS-like domain; sequence NHLPEQGVVF…VKSLQEWLKS (138 aa). An allosteric domain region spans residues 952–1089; it reads NHLPEQGVVF…VKSLQEWLKS (138 aa).

The protein belongs to the CarB family. Composed of two chains; the small (or glutamine) chain promotes the hydrolysis of glutamine to ammonia, which is used by the large (or ammonia) chain to synthesize carbamoyl phosphate. Tetramer of heterodimers (alpha,beta)4. Mg(2+) is required as a cofactor. Requires Mn(2+) as cofactor.

It catalyses the reaction hydrogencarbonate + L-glutamine + 2 ATP + H2O = carbamoyl phosphate + L-glutamate + 2 ADP + phosphate + 2 H(+). The catalysed reaction is hydrogencarbonate + NH4(+) + 2 ATP = carbamoyl phosphate + 2 ADP + phosphate + 2 H(+). The protein operates within amino-acid biosynthesis; L-arginine biosynthesis; carbamoyl phosphate from bicarbonate: step 1/1. It functions in the pathway pyrimidine metabolism; UMP biosynthesis via de novo pathway; (S)-dihydroorotate from bicarbonate: step 1/3. In terms of biological role, large subunit of the glutamine-dependent carbamoyl phosphate synthetase (CPSase). CPSase catalyzes the formation of carbamoyl phosphate from the ammonia moiety of glutamine, carbonate, and phosphate donated by ATP, constituting the first step of 2 biosynthetic pathways, one leading to arginine and/or urea and the other to pyrimidine nucleotides. The large subunit (synthetase) binds the substrates ammonia (free or transferred from glutamine from the small subunit), hydrogencarbonate and ATP and carries out an ATP-coupled ligase reaction, activating hydrogencarbonate by forming carboxy phosphate which reacts with ammonia to form carbamoyl phosphate. The sequence is that of Carbamoyl phosphate synthase large chain from Campylobacter jejuni subsp. jejuni serotype O:2 (strain ATCC 700819 / NCTC 11168).